A 344-amino-acid polypeptide reads, in one-letter code: Protein RecA (344 aa).

65-72 is an ATP binding site; the sequence is GPESSGKT. A compositionally biased stretch (basic and acidic residues) spans 323-337; it reads ELREKFQPAEAPREA. Residues 323–344 are disordered; that stretch reads ELREKFQPAEAPREAGDDEDKE.

Belongs to the RecA family.

It is found in the cytoplasm. In terms of biological role, can catalyze the hydrolysis of ATP in the presence of single-stranded DNA, the ATP-dependent uptake of single-stranded DNA by duplex DNA, and the ATP-dependent hybridization of homologous single-stranded DNAs. It interacts with LexA causing its activation and leading to its autocatalytic cleavage. In Xanthomonas euvesicatoria pv. vesicatoria (strain 85-10) (Xanthomonas campestris pv. vesicatoria), this protein is Protein RecA.